The sequence spans 115 residues: Cycloviolacin-O13 (115 aa).

Residues 1 to 22 (MDAKKMFVALVLIATFALPSLA) form the signal peptide. The propeptide occupies 23 to 81 (TFEKDFITPETIQAILKKSAPLSNIMLEEDVINALLKSKTVISNPIIEEAFLKNSNGLN). The segment at residues 82-111 (GIPCGESCVWIPCISAAIGCSCKSKVCYRN) is a cross-link (cyclopeptide (Gly-Asn)). Disulfide bonds link cysteine 85–cysteine 101, cysteine 89–cysteine 103, and cysteine 94–cysteine 108. The propeptide occupies 112–115 (SLDN).

Cycloviolacin-O13 is a cyclic peptide. In terms of tissue distribution, expressed in leaves, petals, petioles, roots and runners (at protein level).

Its function is as follows. Probably participates in a plant defense mechanism. Has hemolytic activity. The polypeptide is Cycloviolacin-O13 (Viola odorata (Sweet violet)).